A 333-amino-acid chain; its full sequence is UPF0285 protein MTH_1441 (333 aa).

Belongs to the UPF0285 family.

This chain is UPF0285 protein MTH_1441, found in Methanothermobacter thermautotrophicus (strain ATCC 29096 / DSM 1053 / JCM 10044 / NBRC 100330 / Delta H) (Methanobacterium thermoautotrophicum).